A 298-amino-acid chain; its full sequence is Protoheme IX farnesyltransferase (298 aa).

A run of 8 helical transmembrane segments spans residues 16–36 (VVALIVFTALVGMFLAIPGMP), 45–65 (ALGFLGIWLAASAAAAINQLL), 97–117 (VLIVISMTILVVWVNVITAVL), 141–161 (IVIGGLAGATPPMLGWAAVTG), 172–192 (SLLVLIIFIWTPPHFWALAIF), 223–243 (VLLAIVTLLPVAVGMSGVFYL), 244–264 (GGAVVLNAVFLWYAWRMLDPP), and 277–297 (VVYLMALFAFLMVDHLLLPWV).

The protein belongs to the UbiA prenyltransferase family. Protoheme IX farnesyltransferase subfamily.

The protein resides in the cell inner membrane. The enzyme catalyses heme b + (2E,6E)-farnesyl diphosphate + H2O = Fe(II)-heme o + diphosphate. It participates in porphyrin-containing compound metabolism; heme O biosynthesis; heme O from protoheme: step 1/1. Its function is as follows. Converts heme B (protoheme IX) to heme O by substitution of the vinyl group on carbon 2 of heme B porphyrin ring with a hydroxyethyl farnesyl side group. This Xanthomonas campestris pv. campestris (strain 8004) protein is Protoheme IX farnesyltransferase.